Consider the following 281-residue polypeptide: Probable endonuclease 4 (281 aa).

Residues H69, H109, E145, D179, H182, H216, D229, H231, and E261 each coordinate Zn(2+).

The protein belongs to the AP endonuclease 2 family. Requires Zn(2+) as cofactor.

The enzyme catalyses Endonucleolytic cleavage to 5'-phosphooligonucleotide end-products.. In terms of biological role, endonuclease IV plays a role in DNA repair. It cleaves phosphodiester bonds at apurinic or apyrimidinic (AP) sites, generating a 3'-hydroxyl group and a 5'-terminal sugar phosphate. The chain is Probable endonuclease 4 from Aeromonas hydrophila subsp. hydrophila (strain ATCC 7966 / DSM 30187 / BCRC 13018 / CCUG 14551 / JCM 1027 / KCTC 2358 / NCIMB 9240 / NCTC 8049).